The sequence spans 288 residues: MPRTPHLLAIQSHVVFGHAGNAAAVFPMQRIGINVWPLNTVQFSNHTQYGRWTGQVLPPEQIPALVEGIAGIGELGNCDAVLSGYLGSAAQGRAILEVVGRIKQANPRALYLCDPVMGHPEKGCIVAPEVSDFLLEEAAAVADYLCPNQLELDSFCDRQPNSLADCVEMARSLLARGPRAILVKHLNYPGKAGDTFEMLLVAADQVWHLQRPLLAFPRQPVGVGDLTSGLFLSRLLLGDDLRNAFEFTSAAVHEVLLETQARGSYELELVRAQDRIAHPRVRFDAVRL.

Residues Ser-12 and 47–48 (TQ) contribute to the substrate site. ATP contacts are provided by residues Asp-114, Glu-151, Lys-184, and 211-214 (RPLL). Residue Asp-225 participates in substrate binding.

The protein belongs to the pyridoxine kinase family. PdxY subfamily. Homodimer. Mg(2+) serves as cofactor.

The catalysed reaction is pyridoxal + ATP = pyridoxal 5'-phosphate + ADP + H(+). Its pathway is cofactor metabolism; pyridoxal 5'-phosphate salvage; pyridoxal 5'-phosphate from pyridoxal: step 1/1. Pyridoxal kinase involved in the salvage pathway of pyridoxal 5'-phosphate (PLP). Catalyzes the phosphorylation of pyridoxal to PLP. This chain is Pyridoxal kinase PdxY, found in Pseudomonas paraeruginosa (strain DSM 24068 / PA7) (Pseudomonas aeruginosa (strain PA7)).